A 384-amino-acid polypeptide reads, in one-letter code: Monomethylxanthine methyltransferase 2 (384 aa).

S-adenosyl-L-homocysteine is bound by residues tyrosine 18, cysteine 61, asparagine 66, aspartate 100, leucine 101, serine 139, phenylalanine 140, and cysteine 156. Positions 157, 160, and 161 each coordinate theobromine. 3 residues coordinate Mg(2+): asparagine 178, phenylalanine 262, and asparagine 263. Residue tyrosine 368 coordinates theobromine.

The protein belongs to the methyltransferase superfamily. Type-7 methyltransferase family. Requires Mg(2+) as cofactor. Expressed, at low levels, in young leaves, floral buds and immature fruits (grains), but not in old leaves and mature fruits. Highly expressed in developing endosperm and flower buds. Detected in young leaves.

The enzyme catalyses 7-methylxanthine + S-adenosyl-L-methionine = theobromine + S-adenosyl-L-homocysteine + H(+). Its pathway is alkaloid biosynthesis. Involved in the biosynthesis of caffeine. Catalyzes the conversion of 7-methylxanthine (7mX) to theobromine and with a lower activity of paraxanthine to caffeine. Does not have 1-N-methylation activity. The protein is Monomethylxanthine methyltransferase 2 of Coffea arabica (Arabian coffee).